The following is a 329-amino-acid chain: 4-hydroxythreonine-4-phosphate dehydrogenase (329 aa).

2 residues coordinate substrate: His136 and Thr137. Positions 166, 211, and 266 each coordinate a divalent metal cation. Lys274, Asn283, and Arg292 together coordinate substrate.

It belongs to the PdxA family. In terms of assembly, homodimer. Requires Zn(2+) as cofactor. Mg(2+) serves as cofactor. It depends on Co(2+) as a cofactor.

The protein localises to the cytoplasm. The catalysed reaction is 4-(phosphooxy)-L-threonine + NAD(+) = 3-amino-2-oxopropyl phosphate + CO2 + NADH. It functions in the pathway cofactor biosynthesis; pyridoxine 5'-phosphate biosynthesis; pyridoxine 5'-phosphate from D-erythrose 4-phosphate: step 4/5. In terms of biological role, catalyzes the NAD(P)-dependent oxidation of 4-(phosphooxy)-L-threonine (HTP) into 2-amino-3-oxo-4-(phosphooxy)butyric acid which spontaneously decarboxylates to form 3-amino-2-oxopropyl phosphate (AHAP). The sequence is that of 4-hydroxythreonine-4-phosphate dehydrogenase from Shigella flexneri serotype 5b (strain 8401).